Here is a 549-residue protein sequence, read N- to C-terminus: Hydroxylamine reductase (549 aa).

[4Fe-4S] cluster is bound by residues Cys5, Cys8, Cys17, and Cys23. Hybrid [4Fe-2O-2S] cluster is bound by residues His243, Glu267, Cys311, Cys403, Cys431, Cys456, Glu491, and Lys493. The residue at position 403 (Cys403) is a Cysteine persulfide.

It belongs to the HCP family. Requires [4Fe-4S] cluster as cofactor. Hybrid [4Fe-2O-2S] cluster serves as cofactor.

Its subcellular location is the cytoplasm. It carries out the reaction A + NH4(+) + H2O = hydroxylamine + AH2 + H(+). Its function is as follows. Catalyzes the reduction of hydroxylamine to form NH(3) and H(2)O. The protein is Hydroxylamine reductase of Desulfitobacterium hafniense (strain DSM 10664 / DCB-2).